Here is a 597-residue protein sequence, read N- to C-terminus: Arginine--tRNA ligase (597 aa).

Residues 138 to 148 carry the 'HIGH' region motif; it reads ANPTGPMHVGH.

The protein belongs to the class-I aminoacyl-tRNA synthetase family. As to quaternary structure, monomer.

It localises to the cytoplasm. The catalysed reaction is tRNA(Arg) + L-arginine + ATP = L-arginyl-tRNA(Arg) + AMP + diphosphate. In Rhodopseudomonas palustris (strain HaA2), this protein is Arginine--tRNA ligase.